A 309-amino-acid polypeptide reads, in one-letter code: Probable pyridoxal 5'-phosphate synthase subunit PDX1 (309 aa).

Asp-40 lines the D-ribose 5-phosphate pocket. Lys-97 acts as the Schiff-base intermediate with D-ribose 5-phosphate in catalysis. Residue Gly-169 participates in D-ribose 5-phosphate binding. Arg-181 is a binding site for D-glyceraldehyde 3-phosphate. Residues Gly-230 and 251-252 (GS) each bind D-ribose 5-phosphate.

The protein belongs to the PdxS/SNZ family.

It carries out the reaction aldehydo-D-ribose 5-phosphate + D-glyceraldehyde 3-phosphate + L-glutamine = pyridoxal 5'-phosphate + L-glutamate + phosphate + 3 H2O + H(+). It participates in cofactor biosynthesis; pyridoxal 5'-phosphate biosynthesis. Catalyzes the formation of pyridoxal 5'-phosphate from ribose 5-phosphate (RBP), glyceraldehyde 3-phosphate (G3P) and ammonia. The ammonia is provided by PDX2. Can also use ribulose 5-phosphate and dihydroxyacetone phosphate as substrates, resulting from enzyme-catalyzed isomerization of RBP and G3P, respectively. Also plays an indirect role in resistance to singlet oxygen-generating photosensitizers. The protein is Probable pyridoxal 5'-phosphate synthase subunit PDX1 (PDX1) of Ginkgo biloba (Ginkgo).